The sequence spans 873 residues: Paramyosin (873 aa).

Positions 1–25 (MSSRSSKYMYKSSGGAGDISIEYGT) are nonhelical region. A coiled-coil region spans residues 26 to 852 (DLGALTRLED…IRAKHRSWVT (827 aa)). A nonhelical region region spans residues 853–873 (TSQVPGGTRQVFVTEESSQNF).

The protein belongs to the paramyosin family. In terms of assembly, homodimer. Binds IgG and collagen. Expressed in all tissues except in saliva.

It is found in the cytoplasm. The protein localises to the myofibril. Its function is as follows. Paramyosin is a major structural component of many thick filaments isolated from invertebrate muscles. The polypeptide is Paramyosin (PRM) (Rhipicephalus microplus (Cattle tick)).